Consider the following 252-residue polypeptide: Trypsin iota (252 aa).

The N-terminal stretch at 1 to 19 (MAVYGIVATVLVLLLLGDA) is a signal peptide. The propeptide at 20–27 (SDVEATGR) is activation peptide. A Peptidase S1 domain is found at 28–250 (IIGGSDQLIR…LRPWIVKAAN (223 aa)). C53 and C69 are joined by a disulfide. Residues H68 and D113 each act as charge relay system in the active site. 2 cysteine pairs are disulfide-bonded: C175-C193 and C202-C226. The active-site Charge relay system is S206.

The protein belongs to the peptidase S1 family.

Its subcellular location is the secreted. The protein localises to the extracellular space. The enzyme catalyses Preferential cleavage: Arg-|-Xaa, Lys-|-Xaa.. This is Trypsin iota (iotaTry) from Drosophila melanogaster (Fruit fly).